Reading from the N-terminus, the 501-residue chain is ATP synthase subunit alpha (501 aa).

Gly169 to Thr176 is a binding site for ATP.

This sequence belongs to the ATPase alpha/beta chains family. As to quaternary structure, F-type ATPases have 2 components, CF(1) - the catalytic core - and CF(0) - the membrane proton channel. CF(1) has five subunits: alpha(3), beta(3), gamma(1), delta(1), epsilon(1). CF(0) has three main subunits: a(1), b(2) and c(9-12). The alpha and beta chains form an alternating ring which encloses part of the gamma chain. CF(1) is attached to CF(0) by a central stalk formed by the gamma and epsilon chains, while a peripheral stalk is formed by the delta and b chains.

It is found in the cell membrane. It catalyses the reaction ATP + H2O + 4 H(+)(in) = ADP + phosphate + 5 H(+)(out). Its function is as follows. Produces ATP from ADP in the presence of a proton gradient across the membrane. The alpha chain is a regulatory subunit. This Streptococcus pyogenes serotype M2 (strain MGAS10270) protein is ATP synthase subunit alpha.